The sequence spans 345 residues: GTPase Obg (345 aa).

In terms of domain architecture, Obg spans 1–159 (MHFLDQAKIF…MWVWLRLKLL (159 aa)). The disordered stretch occupies residues 121–142 (GDGGRGNASYKTSTNRAPRQHG). The 168-residue stretch at 160–327 (ADCGLVGLPN…VLDKIIEILG (168 aa)) folds into the OBG-type G domain. Residues 166–173 (GLPNAGKS), 191–195 (FTTIR), 212–215 (DIPG), 279–282 (NKID), and 308–310 (SGA) contribute to the GTP site. 2 residues coordinate Mg(2+): serine 173 and threonine 193.

Belongs to the TRAFAC class OBG-HflX-like GTPase superfamily. OBG GTPase family. Monomer. The cofactor is Mg(2+).

Its subcellular location is the cytoplasm. Its function is as follows. An essential GTPase which binds GTP, GDP and possibly (p)ppGpp with moderate affinity, with high nucleotide exchange rates and a fairly low GTP hydrolysis rate. Plays a role in control of the cell cycle, stress response, ribosome biogenesis and in those bacteria that undergo differentiation, in morphogenesis control. This chain is GTPase Obg, found in Rhizorhabdus wittichii (strain DSM 6014 / CCUG 31198 / JCM 15750 / NBRC 105917 / EY 4224 / RW1) (Sphingomonas wittichii).